Here is a 340-residue protein sequence, read N- to C-terminus: Dihydroorotate dehydrogenase (quinone) (340 aa).

Residues 65–69 (AGADK) and threonine 89 each bind FMN. Lysine 69 lines the substrate pocket. Residue 114-118 (NRNGF) participates in substrate binding. FMN contacts are provided by asparagine 142 and asparagine 175. Asparagine 175 provides a ligand contact to substrate. The active-site Nucleophile is the serine 178. Asparagine 180 is a binding site for substrate. FMN contacts are provided by lysine 220 and threonine 248. Residue 249–250 (NT) coordinates substrate. Residues glycine 271, glycine 300, and 321–322 (YS) contribute to the FMN site.

The protein belongs to the dihydroorotate dehydrogenase family. Type 2 subfamily. In terms of assembly, monomer. The cofactor is FMN.

It localises to the cell membrane. It catalyses the reaction (S)-dihydroorotate + a quinone = orotate + a quinol. The protein operates within pyrimidine metabolism; UMP biosynthesis via de novo pathway; orotate from (S)-dihydroorotate (quinone route): step 1/1. In terms of biological role, catalyzes the conversion of dihydroorotate to orotate with quinone as electron acceptor. This chain is Dihydroorotate dehydrogenase (quinone), found in Mannheimia succiniciproducens (strain KCTC 0769BP / MBEL55E).